Here is a 992-residue protein sequence, read N- to C-terminus: UPF0182 protein RHA1_ro06389 (992 aa).

The next 7 helical transmembrane spans lie at Val-18–Ser-38, Leu-63–Leu-83, Leu-114–Ser-134, Trp-174–Gly-194, Val-211–Asp-231, Lys-260–Leu-280, and Met-288–Val-308. The disordered stretch occupies residues Thr-904–Ser-948. Residues Ala-908–Ala-934 show a composition bias toward low complexity.

It belongs to the UPF0182 family.

The protein resides in the cell membrane. In Rhodococcus jostii (strain RHA1), this protein is UPF0182 protein RHA1_ro06389.